Here is a 518-residue protein sequence, read N- to C-terminus: Ell-associated factor Eaf (518 aa).

2 stretches are compositionally biased toward polar residues: residues lysine 119–proline 128 and glutamate 163–asparagine 182. Disordered stretches follow at residues lysine 119 to histidine 216 and alanine 241 to aspartate 518. Serine 192 carries the post-translational modification Phosphoserine. 2 stretches are compositionally biased toward polar residues: residues alanine 253 to glycine 265 and methionine 274 to glycine 284. The segment covering glutamine 289–glutamine 342 has biased composition (low complexity). Polar residues predominate over residues arginine 343–methionine 355. The span at alanine 368–alanine 377 shows a compositional bias: low complexity. Acidic residues predominate over residues glutamate 397 to glutamate 412. Composition is skewed to low complexity over residues histidine 418–serine 428, glutamine 463–glutamine 476, and asparagine 500–aspartate 518.

Belongs to the EAF family.

It localises to the nucleus. Its function is as follows. Promotes transcriptional elongation by Su(Tpl)/ELL. Essential for development. The polypeptide is Ell-associated factor Eaf (Drosophila mojavensis (Fruit fly)).